The chain runs to 845 residues: Protein P (845 aa).

The interval 1–179 (MPLSYQHFLK…FCGSPYSWEQ (179 aa)) is terminal protein domain (TP). The tract at residues 180–348 (ELHHGRLVTK…YCLSHLVNLL (169 aa)) is spacer. Disordered stretches follow at residues 188–211 (TKTSQRHGDKSVCSQPSGILSRSS) and 288–317 (YSHLSTSKRQSSSGHKVEFPSFPPSSARSQ). Composition is skewed to polar residues over residues 199-211 (VCSQPSGILSRSS) and 290-301 (HLSTSKRQSSSG). The tract at residues 349 to 692 (EDWGPCTDHG…YMNLYPVARQ (344 aa)) is polymerase/reverse transcriptase domain (RT). The 244-residue stretch at 359–602 (EHHIRIPRTP…YSLNFMGYII (244 aa)) folds into the Reverse transcriptase domain. Positions 431, 553, and 554 each coordinate Mg(2+).

The protein belongs to the hepadnaviridae P protein family.

It catalyses the reaction DNA(n) + a 2'-deoxyribonucleoside 5'-triphosphate = DNA(n+1) + diphosphate. It carries out the reaction Endonucleolytic cleavage to 5'-phosphomonoester.. Its activity is regulated as follows. Activated by host HSP70 and HSP40 in vitro to be able to bind the epsilon loop of the pgRNA. Because deletion of the RNase H region renders the protein partly chaperone-independent, the chaperones may be needed indirectly to relieve occlusion of the RNA-binding site by this domain. Inhibited by several reverse-transcriptase inhibitors: Lamivudine, Adefovir and Entecavir. Its function is as follows. Multifunctional enzyme that converts the viral RNA genome into dsDNA in viral cytoplasmic capsids. This enzyme displays a DNA polymerase activity that can copy either DNA or RNA templates, and a ribonuclease H (RNase H) activity that cleaves the RNA strand of RNA-DNA heteroduplexes in a partially processive 3'- to 5'-endonucleasic mode. Neo-synthesized pregenomic RNA (pgRNA) are encapsidated together with the P protein, and reverse-transcribed inside the nucleocapsid. Initiation of reverse-transcription occurs first by binding the epsilon loop on the pgRNA genome, and is initiated by protein priming, thereby the 5'-end of (-)DNA is covalently linked to P protein. Partial (+)DNA is synthesized from the (-)DNA template and generates the relaxed circular DNA (RC-DNA) genome. After budding and infection, the RC-DNA migrates in the nucleus, and is converted into a plasmid-like covalently closed circular DNA (cccDNA). The activity of P protein does not seem to be necessary for cccDNA generation, and is presumably released from (+)DNA by host nuclear DNA repair machinery. In Homo sapiens (Human), this protein is Protein P.